The primary structure comprises 437 residues: GTPase Der (437 aa).

2 EngA-type G domains span residues 4–168 (PVVA…PAED) and 177–352 (IRVS…QAHS). GTP is bound by residues 10-17 (GRPNVGKS), 57-61 (DTGGI), 120-123 (NKAD), 183-190 (GRPNVGKS), 230-234 (DTAGM), and 295-298 (NKWD). In terms of domain architecture, KH-like spans 353 to 437 (MRIPTAVLND…PVRIWTRKKT (85 aa)).

This sequence belongs to the TRAFAC class TrmE-Era-EngA-EngB-Septin-like GTPase superfamily. EngA (Der) GTPase family. As to quaternary structure, associates with the 50S ribosomal subunit.

Its function is as follows. GTPase that plays an essential role in the late steps of ribosome biogenesis. The protein is GTPase Der of Brevibacillus brevis (strain 47 / JCM 6285 / NBRC 100599).